The sequence spans 361 residues: Myb/SANT-like DNA-binding domain-containing protein 7 (361 aa).

A Myb-like domain is found at 11–70 (RWSRQETRTLLSILGEAEYIQRLQTVHHNADVYQAVSKRMQQEGFRRTERQCRSKFKVLK). 2 disordered regions span residues 174 to 198 (TSDL…SYSS) and 217 to 272 (RLGV…ARRR). 2 stretches are compositionally biased toward polar residues: residues 187-198 (AGCSQGTPSYSS) and 226-249 (PCTS…SSSR).

The protein is Myb/SANT-like DNA-binding domain-containing protein 7 of Homo sapiens (Human).